The sequence spans 137 residues: Large ribosomal subunit protein uL16 (137 aa).

The protein belongs to the universal ribosomal protein uL16 family. In terms of assembly, part of the 50S ribosomal subunit.

Its function is as follows. Binds 23S rRNA and is also seen to make contacts with the A and possibly P site tRNAs. The sequence is that of Large ribosomal subunit protein uL16 from Mesorhizobium japonicum (strain LMG 29417 / CECT 9101 / MAFF 303099) (Mesorhizobium loti (strain MAFF 303099)).